Consider the following 984-residue polypeptide: Translation initiation factor IF-2 (984 aa).

Disordered regions lie at residues 92 to 267 (KKRT…ERRR) and 280 to 392 (MNAP…EEHV). The span at 104 to 123 (PATPEVQPVAEAPAAAPAAP) shows a compositional bias: low complexity. Basic and acidic residues predominate over residues 124–177 (RIDEAELARREEEARRQAELIRRQEEELAEKRRLREEAEAREREQAEKAERAEQ). Residues 193–235 (DAAAAAPAKEAAKPAAAPVAAAAAAAEQQAADTKLAAQTAATQ) are compositionally biased toward low complexity. Basic and acidic residues-rich tracts occupy residues 236–267 (AKED…ERRR) and 291–302 (KAPEKPQPEKAA). The span at 310–335 (PAAPAARPGAPAAPGAAAAPGAAGAG) shows a compositional bias: low complexity. Basic and acidic residues predominate over residues 351-361 (PAKKKEIKTRG). Over residues 363–375 (ASGGVGRGNWRGG) the composition is skewed to gly residues. Over residues 381–392 (GSNDRGGHEEHV) the composition is skewed to basic and acidic residues. The region spanning 484-653 (PRAPVVTVMG…LLQAEVLELK (170 aa)) is the tr-type G domain. A G1 region spans residues 493 to 500 (GHVDHGKT). 493–500 (GHVDHGKT) is a GTP binding site. The G2 stretch occupies residues 518-522 (GITQH). The G3 stretch occupies residues 539–542 (DTPG). Residues 539 to 543 (DTPGH) and 593 to 596 (NKID) contribute to the GTP site. Residues 593–596 (NKID) are G4. Residues 629–631 (SAK) are G5.

It belongs to the TRAFAC class translation factor GTPase superfamily. Classic translation factor GTPase family. IF-2 subfamily.

The protein localises to the cytoplasm. Its function is as follows. One of the essential components for the initiation of protein synthesis. Protects formylmethionyl-tRNA from spontaneous hydrolysis and promotes its binding to the 30S ribosomal subunits. Also involved in the hydrolysis of GTP during the formation of the 70S ribosomal complex. The polypeptide is Translation initiation factor IF-2 (Variovorax paradoxus (strain S110)).